The chain runs to 328 residues: GTP 3',8-cyclase (328 aa).

A Radical SAM core domain is found at 1–229 (MNQVDYLRIS…ESQVRGAGPA (229 aa)). A GTP-binding site is contributed by Arg-8. Residues Cys-15 and Cys-19 each coordinate [4Fe-4S] cluster. Tyr-21 serves as a coordination point for S-adenosyl-L-methionine. Cys-22 provides a ligand contact to [4Fe-4S] cluster. Arg-60 is a binding site for GTP. An S-adenosyl-L-methionine-binding site is contributed by Gly-64. A GTP-binding site is contributed by Thr-91. Residue Ser-115 coordinates S-adenosyl-L-methionine. Lys-155 lines the GTP pocket. Met-189 lines the S-adenosyl-L-methionine pocket. [4Fe-4S] cluster contacts are provided by Cys-252 and Cys-255. 257 to 259 (RMR) is a GTP binding site. [4Fe-4S] cluster is bound at residue Cys-269.

This sequence belongs to the radical SAM superfamily. MoaA family. As to quaternary structure, monomer and homodimer. [4Fe-4S] cluster is required as a cofactor.

It carries out the reaction GTP + AH2 + S-adenosyl-L-methionine = (8S)-3',8-cyclo-7,8-dihydroguanosine 5'-triphosphate + 5'-deoxyadenosine + L-methionine + A + H(+). The protein operates within cofactor biosynthesis; molybdopterin biosynthesis. Functionally, catalyzes the cyclization of GTP to (8S)-3',8-cyclo-7,8-dihydroguanosine 5'-triphosphate. The chain is GTP 3',8-cyclase from Nostoc punctiforme (strain ATCC 29133 / PCC 73102).